The sequence spans 492 residues: MPSFLVPSLVSSPVLLKLLFSPGPKTIWSLWQQPMLFQEATAFENMTKDWNYLEGSQKDCYRDTMLDSYENTVPQGSFLQLSMMPQRAGNDPPGVSNASEMEMEISNMREKFLMSVTKLVESKSYNSKVFSKEKYFQTIKEVKEAKEKGKKSSRDYRRAAKYDVISVQGTEKLIEATHGERDRIRYYVHKEELFDILHDTHLSIGHGGRTRMLKELQGKYGNVTKEVIVLYLTLCKQCHQKNPVPKRGLAPKPMTFKDIDSTCQVEILDMQSSADGEFKFILYYQDHSTKFIILRPLRTKQAHEVVSVLLDIFTILGTPSVLDSDSGVEFTNQVVHELNELWPDLKIVSGKYHPGQSQGSLEGASRDVKNMISTWMQSNHSCHWAKGLRFMQMVRNQAFDVSLQQSPFEAMFGYKAKFGLYSSNLPRETVATLQTEEELEIAEEQLENSLWIRQEERAEIGADRSDMDDDMDPTPEASEPSTSQGTSGLLCW.

One can recognise a KRAB domain in the interval 36–117 (LFQEATAFEN…MREKFLMSVT (82 aa)). S115 carries the phosphoserine modification. T117 carries the post-translational modification Phosphothreonine. Positions 247 to 415 (RGLAPKPMTF…SPFEAMFGYK (169 aa)) constitute an Integrase catalytic domain. Positions 427–457 (RETVATLQTEEELEIAEEQLENSLWIRQEER) form a coiled coil. A compositionally biased stretch (basic and acidic residues) spans 455 to 465 (EERAEIGADRS). The segment at 455–492 (EERAEIGADRSDMDDDMDPTPEASEPSTSQGTSGLLCW) is disordered. The segment covering 479-492 (EPSTSQGTSGLLCW) has biased composition (polar residues).

This chain is KRAB-A domain-containing protein 2 (KRBA2), found in Homo sapiens (Human).